The chain runs to 356 residues: CX3C chemokine receptor 1 (356 aa).

The Extracellular portion of the chain corresponds to 1-26 (MTTLYSDWATESFEYDESSEACFIGD). Residues 27-47 (IVAFGTIFLSIFYSLVFAFGL) traverse the membrane as a helical segment. The Cytoplasmic portion of the chain corresponds to 48-68 (VGNLLVVCALTSSRKPKSITD). Residues 69–89 (IYLLNLALSDLLFVATLPFWT) traverse the membrane as a helical segment. Residues 90 to 105 (HYVISEQGFHNAVCKL) lie on the Extracellular side of the membrane. A disulfide bond links Cys103 and Cys176. The helical transmembrane segment at 106 to 126 (TTALFFIGFFGGIFFITVISI) threads the bilayer. Residues 127–147 (DRYMAIVLAANSINNRTVQHG) lie on the Cytoplasmic side of the membrane. The chain crosses the membrane as a helical span at residues 148-168 (VTTSLGVWAAAILVAAPQFMF). The Extracellular portion of the chain corresponds to 169 to 195 (TKQKGNECLGDYPEVLQDIWPVLRNTE). A helical membrane pass occupies residues 196–216 (ANFLGFLLPVLIMSYCYFRII). Residues 217–232 (QTLFSCKNHKKAKAIK) lie on the Cytoplasmic side of the membrane. A helical transmembrane segment spans residues 233–253 (LILLVVIVFFLFWTPYNVMIF). Topologically, residues 254–277 (LETLKLYGFFPNCDMKRDLRLALS) are extracellular. The helical transmembrane segment at 278–298 (VTETVAFSHCCLNPLIYAFAG) threads the bilayer. The Cytoplasmic portion of the chain corresponds to 299–356 (QKFRRYLRHLSRKCQAVLCGRPVHVSFSPSESQRSRQESIVSSNFTHYTSDGDASLLL). Residue Thr347 is modified to Phosphothreonine.

The protein belongs to the G-protein coupled receptor 1 family. As to quaternary structure, found in a ternary complex with CX3CL1 and ITGAV:ITGB3 or ITGA4:ITGB1. This protein is not N-glycosylated which is unusual for G-protein-coupled receptors.

Its subcellular location is the cell membrane. In terms of biological role, receptor for the C-X3-C chemokine fractalkine (CX3CL1) present on many early leukocyte cells; CX3CR1-CX3CL1 signaling exerts distinct functions in different tissue compartments, such as immune response, inflammation, cell adhesion and chemotaxis. CX3CR1-CX3CL1 signaling mediates cell migratory functions. Responsible for the recruitment of natural killer (NK) cells to inflamed tissues. Acts as a regulator of inflammation process leading to atherogenesis by mediating macrophage and monocyte recruitment to inflamed atherosclerotic plaques, promoting cell survival. Involved in airway inflammation by promoting interleukin 2-producing T helper (Th2) cell survival in inflamed lung. Involved in the migration of circulating monocytes to non-inflamed tissues, where they differentiate into macrophages and dendritic cells. Acts as a negative regulator of angiogenesis, probably by promoting macrophage chemotaxis. Plays a key role in brain microglia by regulating inflammatory response in the central nervous system (CNS) and regulating synapse maturation. Required to restrain the microglial inflammatory response in the CNS and the resulting parenchymal damage in response to pathological stimuli. Involved in brain development by participating in synaptic pruning, a natural process during which brain microglia eliminates extra synapses during postnatal development. Synaptic pruning by microglia is required to promote the maturation of circuit connectivity during brain development. Acts as an important regulator of the gut microbiota by controlling immunity to intestinal bacteria and fungi. Expressed in lamina propria dendritic cells in the small intestine, which form transepithelial dendrites capable of taking up bacteria in order to provide defense against pathogenic bacteria. Required to initiate innate and adaptive immune responses against dissemination of commensal fungi (mycobiota) component of the gut: expressed in mononuclear phagocytes (MNPs) and acts by promoting induction of antifungal IgG antibodies response to confer protection against disseminated C.albicans or C.auris infection. Also acts as a receptor for C-C motif chemokine CCL26, inducing cell chemotaxis. The chain is CX3C chemokine receptor 1 from Oryctolagus cuniculus (Rabbit).